Consider the following 274-residue polypeptide: 4-hydroxy-3-methylbut-2-enyl diphosphate reductase (274 aa).

C12 contacts [4Fe-4S] cluster. Positions 36 and 70 each coordinate (2E)-4-hydroxy-3-methylbut-2-enyl diphosphate. Dimethylallyl diphosphate-binding residues include H36 and H70. Residues H36 and H70 each coordinate isopentenyl diphosphate. C92 contributes to the [4Fe-4S] cluster binding site. H120 is a binding site for (2E)-4-hydroxy-3-methylbut-2-enyl diphosphate. H120 lines the dimethylallyl diphosphate pocket. H120 contributes to the isopentenyl diphosphate binding site. The Proton donor role is filled by E122. Residue T158 participates in (2E)-4-hydroxy-3-methylbut-2-enyl diphosphate binding. C186 is a [4Fe-4S] cluster binding site. The (2E)-4-hydroxy-3-methylbut-2-enyl diphosphate site is built by S214, S215, N216, and S258. S214, S215, N216, and S258 together coordinate dimethylallyl diphosphate. The isopentenyl diphosphate site is built by S214, S215, N216, and S258.

The protein belongs to the IspH family. It depends on [4Fe-4S] cluster as a cofactor.

The enzyme catalyses isopentenyl diphosphate + 2 oxidized [2Fe-2S]-[ferredoxin] + H2O = (2E)-4-hydroxy-3-methylbut-2-enyl diphosphate + 2 reduced [2Fe-2S]-[ferredoxin] + 2 H(+). It catalyses the reaction dimethylallyl diphosphate + 2 oxidized [2Fe-2S]-[ferredoxin] + H2O = (2E)-4-hydroxy-3-methylbut-2-enyl diphosphate + 2 reduced [2Fe-2S]-[ferredoxin] + 2 H(+). The protein operates within isoprenoid biosynthesis; dimethylallyl diphosphate biosynthesis; dimethylallyl diphosphate from (2E)-4-hydroxy-3-methylbutenyl diphosphate: step 1/1. Its pathway is isoprenoid biosynthesis; isopentenyl diphosphate biosynthesis via DXP pathway; isopentenyl diphosphate from 1-deoxy-D-xylulose 5-phosphate: step 6/6. Catalyzes the conversion of 1-hydroxy-2-methyl-2-(E)-butenyl 4-diphosphate (HMBPP) into a mixture of isopentenyl diphosphate (IPP) and dimethylallyl diphosphate (DMAPP). Acts in the terminal step of the DOXP/MEP pathway for isoprenoid precursor biosynthesis. The polypeptide is 4-hydroxy-3-methylbut-2-enyl diphosphate reductase (Helicobacter pylori (strain Shi470)).